A 159-amino-acid polypeptide reads, in one-letter code: Endoribonuclease YbeY (159 aa).

The Zn(2+) site is built by histidine 117, histidine 121, and histidine 127.

Belongs to the endoribonuclease YbeY family. Zn(2+) is required as a cofactor.

The protein resides in the cytoplasm. Functionally, single strand-specific metallo-endoribonuclease involved in late-stage 70S ribosome quality control and in maturation of the 3' terminus of the 16S rRNA. The protein is Endoribonuclease YbeY of Azorhizobium caulinodans (strain ATCC 43989 / DSM 5975 / JCM 20966 / LMG 6465 / NBRC 14845 / NCIMB 13405 / ORS 571).